A 104-amino-acid chain; its full sequence is Large ribosomal subunit protein bL21 (104 aa).

Belongs to the bacterial ribosomal protein bL21 family. Part of the 50S ribosomal subunit. Contacts protein L20.

This protein binds to 23S rRNA in the presence of protein L20. The chain is Large ribosomal subunit protein bL21 from Kosmotoga olearia (strain ATCC BAA-1733 / DSM 21960 / TBF 19.5.1).